A 529-amino-acid polypeptide reads, in one-letter code: Bifunctional purine biosynthesis protein PurH (529 aa).

The MGS-like domain maps to Met-1 to Val-148. Lys-287 is subject to N6-acetyllysine.

This sequence belongs to the PurH family.

It catalyses the reaction (6R)-10-formyltetrahydrofolate + 5-amino-1-(5-phospho-beta-D-ribosyl)imidazole-4-carboxamide = 5-formamido-1-(5-phospho-D-ribosyl)imidazole-4-carboxamide + (6S)-5,6,7,8-tetrahydrofolate. It carries out the reaction IMP + H2O = 5-formamido-1-(5-phospho-D-ribosyl)imidazole-4-carboxamide. The protein operates within purine metabolism; IMP biosynthesis via de novo pathway; 5-formamido-1-(5-phospho-D-ribosyl)imidazole-4-carboxamide from 5-amino-1-(5-phospho-D-ribosyl)imidazole-4-carboxamide (10-formyl THF route): step 1/1. Its pathway is purine metabolism; IMP biosynthesis via de novo pathway; IMP from 5-formamido-1-(5-phospho-D-ribosyl)imidazole-4-carboxamide: step 1/1. The polypeptide is Bifunctional purine biosynthesis protein PurH (Escherichia coli (strain 55989 / EAEC)).